The following is a 225-amino-acid chain: Ribose-5-phosphate isomerase A (225 aa).

Substrate contacts are provided by residues 32 to 35 (TGST), 85 to 88 (DGAD), and 98 to 101 (KGGG). Glu107 (proton acceptor) is an active-site residue. Lys125 serves as a coordination point for substrate.

The protein belongs to the ribose 5-phosphate isomerase family. Homodimer.

It catalyses the reaction aldehydo-D-ribose 5-phosphate = D-ribulose 5-phosphate. It functions in the pathway carbohydrate degradation; pentose phosphate pathway; D-ribose 5-phosphate from D-ribulose 5-phosphate (non-oxidative stage): step 1/1. Functionally, catalyzes the reversible conversion of ribose-5-phosphate to ribulose 5-phosphate. The polypeptide is Ribose-5-phosphate isomerase A (Hahella chejuensis (strain KCTC 2396)).